We begin with the raw amino-acid sequence, 248 residues long: Large ribosomal subunit protein uL4 (248 aa).

A disordered region spans residues 45–105 (PYGADPYAGM…KDQSKSVNTK (61 aa)). The span at 92–105 (PKAEKDQSKSVNTK) shows a compositional bias: basic and acidic residues.

This sequence belongs to the universal ribosomal protein uL4 family. Part of the 50S ribosomal subunit.

In terms of biological role, one of the primary rRNA binding proteins, this protein initially binds near the 5'-end of the 23S rRNA. It is important during the early stages of 50S assembly. It makes multiple contacts with different domains of the 23S rRNA in the assembled 50S subunit and ribosome. Functionally, forms part of the polypeptide exit tunnel. In Haloquadratum walsbyi (strain DSM 16790 / HBSQ001), this protein is Large ribosomal subunit protein uL4.